A 329-amino-acid polypeptide reads, in one-letter code: Taste receptor type 2 member 134 (329 aa).

The Extracellular segment spans residues 1-27 (MRCSLRGCVQGRGGKSGVSLSKFSPKK). Residues 28–48 (MSFFFIFMVIFCIQSLVALLQ) traverse the membrane as a helical segment. Residues 49-68 (NGFLATVLGREWVRSQGLPA) lie on the Cytoplasmic side of the membrane. A helical transmembrane segment spans residues 69 to 89 (GDMIVACLAASRFCLHGVAIV). Over 90 to 121 (NNFLTFVKLWSQKIYFSVLWDFVNTVNFWCTT) the chain is Extracellular. A helical transmembrane segment spans residues 122-142 (WLAIFYCVKISSFSHPIFFWI). The Cytoplasmic portion of the chain corresponds to 143-153 (KWRISRSVPRL). A helical transmembrane segment spans residues 154–174 (LLGSLVIGGLSAVSSATGNTI). The Extracellular portion of the chain corresponds to 175-201 (AFQMTACENYTLAYRTRAFYAYYFRCH). N-linked (GlcNAc...) asparagine glycosylation is present at Asn-183. Residues 202-222 (AMLMWIIPFFLFLLSVILLMF) form a helical membrane-spanning segment. At 223–251 (SLYRHLEHMRYRRPWSHDYSTQAHTMALK) the chain is on the cytoplasmic side. The chain crosses the membrane as a helical span at residues 252-272 (SLAFFLVFYTSYVLFLVISVT). Topologically, residues 273 to 282 (RVVNVHSSWH) are extracellular. A helical transmembrane segment spans residues 283 to 303 (WAWEVITYMGILLHSTILTLS). Topologically, residues 304–329 (NPKMRKALKIKFPDLCVARSQDKRRG) are cytoplasmic.

The protein belongs to the G-protein coupled receptor T2R family. As to expression, expressed in tongue and gastrointestinal tract.

It localises to the membrane. Its function is as follows. Putative taste receptor which may play a role in the perception of bitterness. This Rattus norvegicus (Rat) protein is Taste receptor type 2 member 134.